The following is a 427-amino-acid chain: Glutamate-1-semialdehyde 2,1-aminomutase (427 aa).

An N6-(pyridoxal phosphate)lysine modification is found at Lys265.

Belongs to the class-III pyridoxal-phosphate-dependent aminotransferase family. HemL subfamily. Homodimer. Pyridoxal 5'-phosphate is required as a cofactor.

The protein resides in the cytoplasm. The enzyme catalyses (S)-4-amino-5-oxopentanoate = 5-aminolevulinate. It functions in the pathway porphyrin-containing compound metabolism; protoporphyrin-IX biosynthesis; 5-aminolevulinate from L-glutamyl-tRNA(Glu): step 2/2. This chain is Glutamate-1-semialdehyde 2,1-aminomutase, found in Pseudomonas fluorescens (strain Pf0-1).